The primary structure comprises 414 residues: Eukaryotic initiation factor 4A-3 (414 aa).

Alanine 2 is modified (N-acetylalanine). The Q motif signature appears at 41–69 (DSFDAMELQPDLLRGIYAYGFEKPSAIQQ). The 171-residue stretch at 72 to 242 (IIPFCKGLDV…RKFMNKPVRI (171 aa)) folds into the Helicase ATP-binding domain. Residue 85–92 (AQSGTGKT) participates in ATP binding. Serine 106 carries the phosphoserine modification. Phosphothreonine is present on threonine 147. The DEAD box signature appears at 190-193 (DEAD). Residues 253–414 (GIKQFYVNVD…ELPSNVADLL (162 aa)) form the Helicase C-terminal domain.

This sequence belongs to the DEAD box helicase family. eIF4A subfamily. In terms of assembly, eIF4F is a multi-subunit complex, the composition of which varies with external and internal environmental conditions. It is composed of at least EIF4A, EIF4E and EIF4G.

The protein localises to the cytoplasm. It catalyses the reaction ATP + H2O = ADP + phosphate + H(+). In terms of biological role, ATP-dependent RNA helicase which is a subunit of the eIF4F complex involved in cap recognition and is required for mRNA binding to ribosome. In the current model of translation initiation, eIF4A unwinds RNA secondary structures in the 5'-UTR of mRNAs which is necessary to allow efficient binding of the small ribosomal subunit, and subsequent scanning for the initiator codon. In Arabidopsis thaliana (Mouse-ear cress), this protein is Eukaryotic initiation factor 4A-3 (TIF4A-3).